Reading from the N-terminus, the 411-residue chain is Endo-1,4-beta-xylanase A (411 aa).

An N-terminal signal peptide occupies residues 1–33 (MKKFKIRKLMARVLALALVFSTFFMVSKVDANA). The 349-residue stretch at 34–382 (ASYNLMETYG…KPAYDEVVKA (349 aa)) folds into the GH10 domain. Glu201 (proton donor) is an active-site residue. The Nucleophile role is filled by Glu311. Positions 387–411 (FGNPGSFTPQPTITPQPTPTPSGQT) are disordered. Over residues 398 to 411 (TITPQPTPTPSGQT) the composition is skewed to pro residues.

It belongs to the glycosyl hydrolase 10 (cellulase F) family.

The enzyme catalyses Endohydrolysis of (1-&gt;4)-beta-D-xylosidic linkages in xylans.. The protein operates within glycan degradation; xylan degradation. In terms of biological role, b.fibrisolvens is located in the rumen of ruminant animals, where it contributes to the animal's digestion of plant material by hydrolyzing hemicellulose with its xylanases. This chain is Endo-1,4-beta-xylanase A (xynA), found in Butyrivibrio fibrisolvens.